The following is a 1216-amino-acid chain: DNA-directed RNA polymerase subunit beta (1216 aa).

A disordered region spans residues 1185 to 1216; that stretch reads EEKQELPSQEYESLNLDQELKTASENVSESEF. Over residues 1190–1216 the composition is skewed to polar residues; sequence LPSQEYESLNLDQELKTASENVSESEF.

The protein belongs to the RNA polymerase beta chain family. In terms of assembly, the RNAP catalytic core consists of 2 alpha, 1 beta, 1 beta' and 1 omega subunit. When a sigma factor is associated with the core the holoenzyme is formed, which can initiate transcription.

The enzyme catalyses RNA(n) + a ribonucleoside 5'-triphosphate = RNA(n+1) + diphosphate. In terms of biological role, DNA-dependent RNA polymerase catalyzes the transcription of DNA into RNA using the four ribonucleoside triphosphates as substrates. This is DNA-directed RNA polymerase subunit beta from Mycoplasmopsis pulmonis (strain UAB CTIP) (Mycoplasma pulmonis).